A 363-amino-acid polypeptide reads, in one-letter code: Phospho-N-acetylmuramoyl-pentapeptide-transferase (363 aa).

10 consecutive transmembrane segments (helical) span residues 3-23, 48-68, 83-103, 121-141, 159-179, 192-212, 234-254, 261-281, 286-306, and 340-360; these read QILF…PLLI, GTPT…YFLA, PTFS…VGFL, AKMI…LQFA, FGWT…ILAM, LATG…VWQF, PLDL…FLWW, IFMG…LAIC, LLMA…VIQV, and FWII…AGWA.

It belongs to the glycosyltransferase 4 family. MraY subfamily. It depends on Mg(2+) as a cofactor.

It localises to the cell membrane. The enzyme catalyses UDP-N-acetyl-alpha-D-muramoyl-L-alanyl-gamma-D-glutamyl-meso-2,6-diaminopimeloyl-D-alanyl-D-alanine + di-trans,octa-cis-undecaprenyl phosphate = di-trans,octa-cis-undecaprenyl diphospho-N-acetyl-alpha-D-muramoyl-L-alanyl-D-glutamyl-meso-2,6-diaminopimeloyl-D-alanyl-D-alanine + UMP. The protein operates within cell wall biogenesis; peptidoglycan biosynthesis. Catalyzes the initial step of the lipid cycle reactions in the biosynthesis of the cell wall peptidoglycan: transfers peptidoglycan precursor phospho-MurNAc-pentapeptide from UDP-MurNAc-pentapeptide onto the lipid carrier undecaprenyl phosphate, yielding undecaprenyl-pyrophosphoryl-MurNAc-pentapeptide, known as lipid I. This Streptomyces coelicolor (strain ATCC BAA-471 / A3(2) / M145) protein is Phospho-N-acetylmuramoyl-pentapeptide-transferase.